Reading from the N-terminus, the 182-residue chain is Crossover junction endodeoxyribonuclease RuvC (182 aa).

Active-site residues include Asp7, Glu69, and Asp141. Asp7, Glu69, and Asp141 together coordinate Mg(2+).

The protein belongs to the RuvC family. Homodimer which binds Holliday junction (HJ) DNA. The HJ becomes 2-fold symmetrical on binding to RuvC with unstacked arms; it has a different conformation from HJ DNA in complex with RuvA. In the full resolvosome a probable DNA-RuvA(4)-RuvB(12)-RuvC(2) complex forms which resolves the HJ. The cofactor is Mg(2+).

Its subcellular location is the cytoplasm. The catalysed reaction is Endonucleolytic cleavage at a junction such as a reciprocal single-stranded crossover between two homologous DNA duplexes (Holliday junction).. The RuvA-RuvB-RuvC complex processes Holliday junction (HJ) DNA during genetic recombination and DNA repair. Endonuclease that resolves HJ intermediates. Cleaves cruciform DNA by making single-stranded nicks across the HJ at symmetrical positions within the homologous arms, yielding a 5'-phosphate and a 3'-hydroxyl group; requires a central core of homology in the junction. The consensus cleavage sequence is 5'-(A/T)TT(C/G)-3'. Cleavage occurs on the 3'-side of the TT dinucleotide at the point of strand exchange. HJ branch migration catalyzed by RuvA-RuvB allows RuvC to scan DNA until it finds its consensus sequence, where it cleaves and resolves the cruciform DNA. This is Crossover junction endodeoxyribonuclease RuvC from Polaromonas naphthalenivorans (strain CJ2).